We begin with the raw amino-acid sequence, 651 residues long: NADH oxidase (651 aa).

Q104 contributes to the FMN binding site. The active-site Proton donor is Y175. Residues R223 and 320-321 (GR) each bind FMN. [4Fe-4S] cluster is bound by residues C344, C347, C351, and C364. The FAD site is built by A396, E415, Q423, K433, and A460.

In the N-terminal section; belongs to the NADH:flavin oxidoreductase/NADH oxidase family. As to quaternary structure, homohexamer. FMN serves as cofactor. It depends on FAD as a cofactor. The cofactor is [4Fe-4S] cluster. The N-terminus is blocked.

It carries out the reaction A + NADH + H(+) = AH2 + NAD(+). Its function is as follows. Reduces a range of alternative electron acceptors. The chain is NADH oxidase from Thermoanaerobacter brockii (Thermoanaerobium brockii).